The primary structure comprises 117 residues: Ig heavy chain V region 186-1 (117 aa).

Residues 1-19 (MGWSCIMLFLAATATGVHS) form the signal peptide. The framework-1 stretch occupies residues 20 to 49 (QVQLQQPGAELVKPGASVKLSCKASGYTFT). A disulfide bridge connects residues C41 and C115. Residues 50–54 (SYWMH) form a complementarity-determining-1 region. Residues 55 to 68 (WVKQRPGRGLEWIG) are framework-2. The tract at residues 69–85 (RIDPNSGGTKYNEKFKS) is complementarity-determining-2. The framework-3 stretch occupies residues 86–117 (KATLTVDTSSSTAYMQLHSLTSEDSAVYYCAR).

The sequence is that of Ig heavy chain V region 186-1 from Mus musculus (Mouse).